The sequence spans 375 residues: Erythronate-4-phosphate dehydrogenase (375 aa).

Substrate-binding residues include Ser-45 and Thr-66. NAD(+) is bound by residues Asp-146, Thr-175, Ala-206 to Arg-208, and Asp-232. The active site involves Arg-208. Glu-237 is an active-site residue. His-254 (proton donor) is an active-site residue. An NAD(+)-binding site is contributed by Gly-257. Residue Tyr-258 participates in substrate binding.

This sequence belongs to the D-isomer specific 2-hydroxyacid dehydrogenase family. PdxB subfamily. In terms of assembly, homodimer.

The protein localises to the cytoplasm. The enzyme catalyses 4-phospho-D-erythronate + NAD(+) = (R)-3-hydroxy-2-oxo-4-phosphooxybutanoate + NADH + H(+). The protein operates within cofactor biosynthesis; pyridoxine 5'-phosphate biosynthesis; pyridoxine 5'-phosphate from D-erythrose 4-phosphate: step 2/5. Its function is as follows. Catalyzes the oxidation of erythronate-4-phosphate to 3-hydroxy-2-oxo-4-phosphonooxybutanoate. The sequence is that of Erythronate-4-phosphate dehydrogenase from Photorhabdus laumondii subsp. laumondii (strain DSM 15139 / CIP 105565 / TT01) (Photorhabdus luminescens subsp. laumondii).